A 351-amino-acid chain; its full sequence is Protein RecA (351 aa).

Residue 68–75 (GPESSGKT) participates in ATP binding.

It belongs to the RecA family.

It localises to the cytoplasm. Can catalyze the hydrolysis of ATP in the presence of single-stranded DNA, the ATP-dependent uptake of single-stranded DNA by duplex DNA, and the ATP-dependent hybridization of homologous single-stranded DNAs. It interacts with LexA causing its activation and leading to its autocatalytic cleavage. The polypeptide is Protein RecA (Chloroflexus aggregans (strain MD-66 / DSM 9485)).